Reading from the N-terminus, the 2472-residue chain is Spectrin alpha chain, non-erythrocytic 1 (2472 aa).

The residue at position 1 (Met-1) is an N-acetylmethionine. Spectrin repeat units lie at residues 45-146 (RFQF…IKLL), 150-251 (KLVQ…QGKL), 256-358 (EVQR…ARLD), 361-465 (YRLQ…QYEQ), 468-570 (DLQL…AQLA), 574-676 (HLQQ…KLRE), 679-781 (QQQQ…QKLA), 785-888 (RLQQ…DLED), and 891-961 (QAQQ…QQVA). A Phosphoserine modification is found at Ser-587. At Lys-637 the chain carries N6-acetyllysine. N6-acetyllysine is present on Lys-803. 6 positions are modified to phosphoserine: Ser-924, Ser-982, Ser-999, Ser-1029, Ser-1031, and Ser-1041. The SH3 domain maps to 967-1026 (TGKELVLALYDYQEKSPREVTMKKGDILTLLNSTNKDWWKVEVNDRQGFVPAAYVKKLDP). Residues 1096–1166 (LFREANELQQ…LESEGLMAEE (71 aa)) form a Spectrin 10 repeat. Tyr-1176 is modified (phosphotyrosine). Phosphoserine occurs at positions 1190, 1207, 1217, 1291, 1306, 1323, and 1338. One copy of the Spectrin 11 repeat lies at 1233–1336 (HEVQRFHRDA…RADQRKAKLG (104 aa)). 2 Spectrin repeats span residues 1339–1441 (HDLQ…RMML) and 1446–1549 (ELQL…KLGE). At Lys-1519 the chain carries N6-acetyllysine. Ser-1550, Ser-1557, Ser-1578, Ser-1615, and Ser-1647 each carry phosphoserine. 7 Spectrin repeats span residues 1552–1656 (TLQQ…KLKE), 1659–1762 (KQQN…KLSE), 1764–1868 (HRLH…RLEE), 1871–1974 (EYQQ…KLDE), 1978–2081 (FLQF…KLLE), 2092–2194 (LFLT…LELQ), and 2206–2310 (LRQE…NLEQ). Position 2020 is a phosphothreonine (Thr-2020). N6-acetyllysine is present on Lys-2052. Thr-2066 carries the phosphothreonine modification. 3 EF-hand domains span residues 2323–2358 (EALKEFSMMFKHFDKDKSGRLNHQEFKSCLRSLGYD), 2366–2401 (EPDPEFEAILDTVDPNRDGHVSLQEYMAFMISRETE), and 2404–2439 (KSSEEIESAFRALSSEGKPYVTKEELYQNLTREQAD). Residues Asp-2336, Asp-2338, Ser-2340, Arg-2342, Glu-2347, Asp-2379, Asn-2381, Asp-2383, His-2385, and Glu-2390 each coordinate Ca(2+). At Lys-2421 the chain carries N6-acetyllysine.

This sequence belongs to the spectrin family. In terms of assembly, like erythrocyte spectrin, the spectrin-like proteins are capable of forming dimers which can further associate to tetramers. Interacts (via C-terminal spectrin repeats) with TRPC4. Interacts with CALM and EMD. Interacts with isoform 1 of ACP1. Identified in a complex with ACTN4, CASK, IQGAP1, MAGI2, NPHS1 and SPTBN1. Interacts with SHANK3 (via ANK repeats). Interacts with CLN3; this interaction regulates the fodrin localization at the plasma membrane. In terms of processing, phosphorylation of Tyr-1176 decreases sensitivity to cleavage by calpain in vitro.

It is found in the cytoplasm. It localises to the cytoskeleton. The protein localises to the cell cortex. Functionally, fodrin, which seems to be involved in secretion, interacts with calmodulin in a calcium-dependent manner and is thus candidate for the calcium-dependent movement of the cytoskeleton at the membrane. The chain is Spectrin alpha chain, non-erythrocytic 1 (Sptan1) from Mus musculus (Mouse).